Reading from the N-terminus, the 125-residue chain is Small ribosomal subunit protein bS6 (125 aa).

The protein belongs to the bacterial ribosomal protein bS6 family.

In terms of biological role, binds together with bS18 to 16S ribosomal RNA. The sequence is that of Small ribosomal subunit protein bS6 from Campylobacter jejuni (strain RM1221).